Consider the following 91-residue polypeptide: Probable Fe(2+)-trafficking protein (91 aa).

Belongs to the Fe(2+)-trafficking protein family. In terms of assembly, monomer.

Could be a mediator in iron transactions between iron acquisition and iron-requiring processes, such as synthesis and/or repair of Fe-S clusters in biosynthetic enzymes. The sequence is that of Probable Fe(2+)-trafficking protein from Klebsiella pneumoniae subsp. pneumoniae (strain ATCC 700721 / MGH 78578).